The primary structure comprises 449 residues: Aspartate aminotransferase 3, chloroplastic (449 aa).

The N-terminal 43 residues, 1–43, are a transit peptide targeting the chloroplast; that stretch reads MKTTHFSSSSSSDRRIGALLRHLNSGSDSDNLSSLYASPTSGG. 3 residues coordinate L-aspartate: Gly81, Trp178, and Asn231. Lys295 is subject to N6-(pyridoxal phosphate)lysine. Arg423 contributes to the L-aspartate binding site.

It belongs to the class-I pyridoxal-phosphate-dependent aminotransferase family. In terms of assembly, homodimer. Pyridoxal 5'-phosphate is required as a cofactor. As to expression, expressed in roots, cauline leaves, flowers, hypocotyl epidermis and root hair cells.

The protein resides in the plastid. It is found in the chloroplast. It catalyses the reaction L-aspartate + 2-oxoglutarate = oxaloacetate + L-glutamate. Its function is as follows. Amino acid aminotransferase important for the metabolism of amino acids and Krebs-cycle related organic acids. No activity with D-Asp or D-Ala as amino donors. In plants, it is involved in nitrogen metabolism and in aspects of carbon and energy metabolism. The polypeptide is Aspartate aminotransferase 3, chloroplastic (ASP3) (Arabidopsis thaliana (Mouse-ear cress)).